A 296-amino-acid polypeptide reads, in one-letter code: PYK10-binding protein 2 (296 aa).

The segment at 1–20 (MAQKVEAKGGKGGNQWDDGS) is disordered. The residue at position 2 (A2) is an N-acetylalanine. 2 consecutive Jacalin-type lectin domains span residues 2-142 (AQKV…YFAP) and 150-293 (AKPL…HVRP).

It belongs to the jacalin lectin family. In terms of assembly, component of the PYK10 complex, at least composed of PYK10/BGLU23, BGLU21, BGLU22, JAL22, JAL23, PBP1/JAL30, PBP2/JAL31, JAL32, JAL33, JAL34, JAL35, GLL22 and GLL23.

Polymerizer-type lectin that may facilitate the correct polymerization of BGLU23/PYK10 upon tissue damage. Activates BGLU21, BGLU22 and BGLU23. The protein is PYK10-binding protein 2 (PBP2) of Arabidopsis thaliana (Mouse-ear cress).